The primary structure comprises 185 residues: ATP synthase subunit delta (185 aa).

Belongs to the ATPase delta chain family. F-type ATPases have 2 components, F(1) - the catalytic core - and F(0) - the membrane proton channel. F(1) has five subunits: alpha(3), beta(3), gamma(1), delta(1), epsilon(1). CF(0) has four main subunits: a(1), b(1), b'(1) and c(10-14). The alpha and beta chains form an alternating ring which encloses part of the gamma chain. F(1) is attached to F(0) by a central stalk formed by the gamma and epsilon chains, while a peripheral stalk is formed by the delta, b and b' chains.

It localises to the cellular thylakoid membrane. In terms of biological role, f(1)F(0) ATP synthase produces ATP from ADP in the presence of a proton or sodium gradient. F-type ATPases consist of two structural domains, F(1) containing the extramembraneous catalytic core and F(0) containing the membrane proton channel, linked together by a central stalk and a peripheral stalk. During catalysis, ATP synthesis in the catalytic domain of F(1) is coupled via a rotary mechanism of the central stalk subunits to proton translocation. This protein is part of the stalk that links CF(0) to CF(1). It either transmits conformational changes from CF(0) to CF(1) or is implicated in proton conduction. In Picosynechococcus sp. (strain ATCC 27264 / PCC 7002 / PR-6) (Agmenellum quadruplicatum), this protein is ATP synthase subunit delta.